We begin with the raw amino-acid sequence, 415 residues long: Casein kinase I isoform delta (415 aa).

Residues 9-277 (YRLGRKIGSG…YLRQLFRNLF (269 aa)) enclose the Protein kinase domain. ATP is bound by residues 15–23 (IGSGSFGDI) and Lys38. Asp128 acts as the Proton acceptor in catalysis. Residues 278–364 (HRQGFSYDYV…TSPRPVSGME (87 aa)) are centrosomal localization signal (CLS). Basic and acidic residues predominate over residues 301 to 315 (ADDAERERRDREERL). The interval 301 to 415 (ADDAERERRD…SSGLQSVVHR (115 aa)) is disordered. An autoinhibitory region spans residues 317-342 (HSRNPATRGLPSTASGRLRGTQEVAP). Ser328 and Ser331 each carry phosphoserine. Residues 347-358 (TPTSHTANTSPR) are compositionally biased toward polar residues. Phosphoserine is present on Ser370. Arg375 bears the Omega-N-methylarginine mark. Residues 380–400 (NISSSDLTGRQDTSRMSTSQI) are compositionally biased toward polar residues. Residues Ser382, Ser383, Ser384, Ser407, and Ser411 each carry the phosphoserine modification.

The protein belongs to the protein kinase superfamily. CK1 Ser/Thr protein kinase family. Casein kinase I subfamily. Monomer. Component of the circadian core oscillator, which includes the CRY proteins, CLOCK, or NPAS2, ARTNL/BMAL1 or ARTNL2/BMAL2, CSNK1D and/or CSNK1E, TIMELESS and the PER proteins. Interacts with DNMT1 and MAP1A. Interacts directly with PER1 and PER2 which may lead to their degradation. Interacts with MAPT/TAU, SNAPIN, DBNDD2, AIB1/NCOA3 and ESR1. Interacts with AKAP9/AKAP450; this interaction promotes centrosomal subcellular location. Binds to tubulins in mitotic cells upon DNA damage. Interacts with GJA1. Interacts with DDX3X; this interaction enhances CSNK1D kinase activity in vitro, but it is unclear whether this interaction is physiologically relevant. Interacts with FAM83A, FAM83B, FAM83E and FAM83H (via DUF1669). Autophosphorylated on serine and threonine residues; this autophosphorylation represses activity. Reactivated by phosphatase-mediated dephosphorylation. May be dephosphorylated by PP1.

The protein resides in the cytoplasm. It is found in the nucleus. The protein localises to the cytoskeleton. It localises to the microtubule organizing center. Its subcellular location is the centrosome. The protein resides in the perinuclear region. It is found in the cell membrane. The protein localises to the spindle. It localises to the golgi apparatus. It carries out the reaction L-seryl-[protein] + ATP = O-phospho-L-seryl-[protein] + ADP + H(+). The catalysed reaction is L-threonyl-[protein] + ATP = O-phospho-L-threonyl-[protein] + ADP + H(+). The enzyme catalyses L-seryl-[tau protein] + ATP = O-phospho-L-seryl-[tau protein] + ADP + H(+). It catalyses the reaction L-threonyl-[tau protein] + ATP = O-phospho-L-threonyl-[tau protein] + ADP + H(+). Its activity is regulated as follows. Exhibits substrate-dependent heparin activation. Drug-mediated inhibition leads to a delay of the oscillations with the magnitude of this effect dependent upon the timing of drug administration. Inhibited by phosphorylation. Its function is as follows. Essential serine/threonine-protein kinase that regulates diverse cellular growth and survival processes including Wnt signaling, DNA repair and circadian rhythms. It can phosphorylate a large number of proteins. Casein kinases are operationally defined by their preferential utilization of acidic proteins such as caseins as substrates. Phosphorylates connexin-43/GJA1, MAP1A, SNAPIN, MAPT/TAU, TOP2A, DCK, HIF1A, EIF6, p53/TP53, DVL2, DVL3, ESR1, AIB1/NCOA3, DNMT1, PKD2, YAP1, PER1 and PER2. Central component of the circadian clock. In balance with PP1, determines the circadian period length through the regulation of the speed and rhythmicity of PER1 and PER2 phosphorylation. Controls PER1 and PER2 nuclear transport and degradation. YAP1 phosphorylation promotes its SCF(beta-TRCP) E3 ubiquitin ligase-mediated ubiquitination and subsequent degradation. DNMT1 phosphorylation reduces its DNA-binding activity. Phosphorylation of ESR1 and AIB1/NCOA3 stimulates their activity and coactivation. Phosphorylation of DVL2 and DVL3 regulates WNT3A signaling pathway that controls neurite outgrowth. Phosphorylates NEDD9/HEF1. EIF6 phosphorylation promotes its nuclear export. Triggers down-regulation of dopamine receptors in the forebrain. Activates DCK in vitro by phosphorylation. TOP2A phosphorylation favors DNA cleavable complex formation. May regulate the formation of the mitotic spindle apparatus in extravillous trophoblast. Modulates connexin-43/GJA1 gap junction assembly by phosphorylation. Probably involved in lymphocyte physiology. Regulates fast synaptic transmission mediated by glutamate. The sequence is that of Casein kinase I isoform delta (CSNK1D) from Pongo abelii (Sumatran orangutan).